The chain runs to 298 residues: GTPase Era (298 aa).

Residues 8 to 176 form the Era-type G domain; that stretch reads RCGRIAVIGR…VSDLLALLPE (169 aa). A G1 region spans residues 16-23; sequence GRPNVGKS. 16-23 serves as a coordination point for GTP; the sequence is GRPNVGKS. A G2 region spans residues 42 to 46; it reads QTTRH. Residues 63-66 are G3; sequence DTPG. GTP contacts are provided by residues 63-67 and 125-128; these read DTPGL and NKID. A G4 region spans residues 125–128; the sequence is NKID. The G5 stretch occupies residues 155–157; that stretch reads VSA. Residues 199 to 283 form the KH type-2 domain; sequence VREQVMRQLG…FLETWVRVRK (85 aa).

The protein belongs to the TRAFAC class TrmE-Era-EngA-EngB-Septin-like GTPase superfamily. Era GTPase family. In terms of assembly, monomer.

It is found in the cytoplasm. The protein resides in the cell inner membrane. In terms of biological role, an essential GTPase that binds both GDP and GTP, with rapid nucleotide exchange. Plays a role in 16S rRNA processing and 30S ribosomal subunit biogenesis and possibly also in cell cycle regulation and energy metabolism. This Xylella fastidiosa (strain Temecula1 / ATCC 700964) protein is GTPase Era.